Here is a 340-residue protein sequence, read N- to C-terminus: Glyceraldehyde-3-phosphate dehydrogenase, cytosolic (340 aa).

NAD(+) contacts are provided by residues 16-17 (RI), Asp38, and Arg85. D-glyceraldehyde 3-phosphate contacts are provided by residues 156-158 (SCT), Thr187, 216-217 (TG), and Arg239. The Nucleophile role is filled by Cys157. Asn321 is an NAD(+) binding site.

Belongs to the glyceraldehyde-3-phosphate dehydrogenase family. Homotetramer.

The protein resides in the cytoplasm. It carries out the reaction D-glyceraldehyde 3-phosphate + phosphate + NAD(+) = (2R)-3-phospho-glyceroyl phosphate + NADH + H(+). It functions in the pathway carbohydrate degradation; glycolysis; pyruvate from D-glyceraldehyde 3-phosphate: step 1/5. Its function is as follows. Key enzyme in glycolysis that catalyzes the first step of the pathway by converting D-glyceraldehyde 3-phosphate (G3P) into 3-phospho-D-glyceroyl phosphate. Essential for the maintenance of cellular ATP levels and carbohydrate metabolism. The chain is Glyceraldehyde-3-phosphate dehydrogenase, cytosolic from Ginkgo biloba (Ginkgo).